The following is a 226-amino-acid chain: Elongation factor 1-delta 2 (226 aa).

A disordered region spans residues 82-131 (TACSVSPTADQKAPAADEEDDDDVDLFGEETEEEKKAAEERAAAVKASGK). Positions 97–113 (ADEEDDDDVDLFGEETE) are enriched in acidic residues. A compositionally biased stretch (basic and acidic residues) spans 114 to 124 (EEKKAAEERAA).

It belongs to the EF-1-beta/EF-1-delta family. EF-1 is composed of 4 subunits: alpha, beta (1B-alpha=beta'), delta (1B-beta), and gamma (1B-gamma).

In terms of biological role, EF-1-beta and EF-1-beta' stimulate the exchange of GDP bound to EF-1-alpha to GTP. In Oryza sativa subsp. japonica (Rice), this protein is Elongation factor 1-delta 2.